Reading from the N-terminus, the 449-residue chain is Sensor protein QseC (449 aa).

The Cytoplasmic segment spans residues 1-12 (MKLTQRLSLRVR). Residues 13-33 (LTLIFLILVSITWAISSFVAW) traverse the membrane as a helical segment. Residues 34–161 (RKTTDNVDEL…REDMALAIVA (128 aa)) are Periplasmic-facing. Residues 162 to 182 (AQLTPWLIALPFMLLILLLLL) traverse the membrane as a helical segment. Positions 183-235 (HRELRPLKKLAQALRFRSPESETPLDAKGVPSEVRPLVEALNQLFSRIHSMMV) constitute an HAMP domain. At 183-449 (HRELRPLKKL…EGGFEAVVRW (267 aa)) the chain is on the cytoplasmic side. Positions 243 to 449 (DAAHELRSPL…EGGFEAVVRW (207 aa)) constitute a Histidine kinase domain. Residue His246 is modified to Phosphohistidine; by autocatalysis.

The protein resides in the cell inner membrane. The enzyme catalyses ATP + protein L-histidine = ADP + protein N-phospho-L-histidine.. Member of a two-component regulatory system QseB/QseC. Activates the flagella regulon by activating transcription of FlhDC. May activate QseB by phosphorylation. The polypeptide is Sensor protein QseC (qseC) (Salmonella typhi).